Here is a 668-residue protein sequence, read N- to C-terminus: Packaging protein UL32 homolog (668 aa).

Residues 1-10 (MNPSTHVSSN) show a composition bias toward polar residues. A disordered region spans residues 1–35 (MNPSTHVSSNGPTTPPHGPHTTFLPPTSPAPSTSS). A compositionally biased stretch (low complexity) spans 19–35 (PHTTFLPPTSPAPSTSS). C200, C203, H276, and C282 together coordinate Zn(2+). Positions 200-282 (CNLCAIISIC…FHLHFFINRC (83 aa)) are zinc finger 1. A disordered region spans residues 401–430 (IEEEEDEEGGEKGGDDPGRHNGGGTSGGFS). Over residues 410–419 (GEKGGDDPGR) the composition is skewed to basic and acidic residues. Residues C459, C462, H567, and C574 each contribute to the Zn(2+) site. The interval 459 to 574 (CLLCELMACS…YKHFFCDPQC (116 aa)) is zinc finger 2.

This sequence belongs to the herpesviridae UL32 protein family.

It is found in the host cytoplasm. The protein localises to the host nucleus. Plays a role in efficient localization of neo-synthesized capsids to nuclear replication compartments, thereby controlling cleavage and packaging of virus genomic DNA. This is Packaging protein UL32 homolog (UL52) from Homo sapiens (Human).